The primary structure comprises 142 residues: ATP synthase epsilon chain (142 aa).

It belongs to the ATPase epsilon chain family. As to quaternary structure, F-type ATPases have 2 components, CF(1) - the catalytic core - and CF(0) - the membrane proton channel. CF(1) has five subunits: alpha(3), beta(3), gamma(1), delta(1), epsilon(1). CF(0) has three main subunits: a, b and c.

The protein localises to the cell inner membrane. Functionally, produces ATP from ADP in the presence of a proton gradient across the membrane. The sequence is that of ATP synthase epsilon chain from Shewanella woodyi (strain ATCC 51908 / MS32).